We begin with the raw amino-acid sequence, 449 residues long: Tubulin beta chain (449 aa).

Gln11, Glu69, Ser138, Gly142, Thr143, Gly144, Asn204, and Asn226 together coordinate GTP. Residue Glu69 coordinates Mg(2+). The interval 426-449 is disordered; it reads QDATAEEEGEFDEEEGVMDAEGAA. A compositionally biased stretch (acidic residues) spans 429 to 443; sequence TAEEEGEFDEEEGVM.

This sequence belongs to the tubulin family. Dimer of alpha and beta chains. A typical microtubule is a hollow water-filled tube with an outer diameter of 25 nm and an inner diameter of 15 nM. Alpha-beta heterodimers associate head-to-tail to form protofilaments running lengthwise along the microtubule wall with the beta-tubulin subunit facing the microtubule plus end conferring a structural polarity. Microtubules usually have 13 protofilaments but different protofilament numbers can be found in some organisms and specialized cells. The cofactor is Mg(2+).

It is found in the cytoplasm. Its subcellular location is the cytoskeleton. Tubulin is the major constituent of microtubules, a cylinder consisting of laterally associated linear protofilaments composed of alpha- and beta-tubulin heterodimers. Microtubules grow by the addition of GTP-tubulin dimers to the microtubule end, where a stabilizing cap forms. Below the cap, tubulin dimers are in GDP-bound state, owing to GTPase activity of alpha-tubulin. This is Tubulin beta chain from Eimeria tenella (Coccidian parasite).